The following is a 428-amino-acid chain: MPSIDVVVAREILDSRGNPTVEVEVGLDDGSTGRAAVPSGASTGAFEAIELRDGDPNRYQGKGVEKAVLAVIEQIGPELVGYDATEQRLIDQAMFDLDATDNKGSLGANAILGVSLAVAHAASEASDLPLFRYLGGPNAHLLPVPMMNILNGGSHADSNVDIQEFMIAPIGAESFSEALRWGAEVYHTLKKVLKTKGLSTGLGDEGGFAPNLESNRAALDLIIEAIKQAGYIPGEQIALALDVAASEFYKDGKYEFEGKSRSAAEMTEYYEELVSAYPLVSIEDPLYEDDWAGWKVITDKLGDKVQIVGDDLFVTNPERLARGIEEGSANALLVKVNQIGSLTETLDAVELAQRNGFKCMMSHRSGETEDVTIADLAVAVNCGQIKTGAPARSDRVAKYNQLLRIEEILDDAAEYAGRSAFPRFRSAN.

Residue Gln-163 coordinates (2R)-2-phosphoglycerate. The active-site Proton donor is Glu-205. Residues Asp-242, Glu-283, and Asp-310 each contribute to the Mg(2+) site. (2R)-2-phosphoglycerate contacts are provided by Lys-335, Arg-364, Ser-365, and Lys-386. Residue Lys-335 is the Proton acceptor of the active site.

Belongs to the enolase family. Mg(2+) serves as cofactor.

It localises to the cytoplasm. The protein localises to the secreted. Its subcellular location is the cell surface. It catalyses the reaction (2R)-2-phosphoglycerate = phosphoenolpyruvate + H2O. It participates in carbohydrate degradation; glycolysis; pyruvate from D-glyceraldehyde 3-phosphate: step 4/5. Functionally, catalyzes the reversible conversion of 2-phosphoglycerate (2-PG) into phosphoenolpyruvate (PEP). It is essential for the degradation of carbohydrates via glycolysis. In Streptomyces avermitilis (strain ATCC 31267 / DSM 46492 / JCM 5070 / NBRC 14893 / NCIMB 12804 / NRRL 8165 / MA-4680), this protein is Enolase.